The following is a 339-amino-acid chain: Putative clathrin assembly protein At1g14686 (339 aa).

The ENTH domain maps to 16 to 148 (SLIAADDILT…ILFHDGNRHR (133 aa)). A disordered region spans residues 283–307 (ESSEESAERTEIAEEEEEEEEEIET). The span at 295 to 305 (AEEEEEEEEEI) shows a compositional bias: acidic residues.

The protein resides in the membrane. Its subcellular location is the clathrin-coated pit. It localises to the golgi apparatus. The protein localises to the cytoplasmic vesicle. It is found in the clathrin-coated vesicle. The protein is Putative clathrin assembly protein At1g14686 of Arabidopsis thaliana (Mouse-ear cress).